Reading from the N-terminus, the 180-residue chain is FMN reductase (NADH) RutF (180 aa).

The protein belongs to the non-flavoprotein flavin reductase family. RutF subfamily.

The enzyme catalyses FMNH2 + NAD(+) = FMN + NADH + 2 H(+). Its function is as follows. Catalyzes the reduction of FMN to FMNH2 which is used to reduce pyrimidine by RutA via the Rut pathway. The polypeptide is FMN reductase (NADH) RutF (Variovorax paradoxus (strain S110)).